The primary structure comprises 98 residues: NADH-ubiquinone oxidoreductase chain 4L (98 aa).

The next 3 helical transmembrane spans lie at 1–21 (MTMVYANIFLAFIMSLMGLLM), 29–49 (SLLCLEGMMLSLFVMMTVTIL), and 61–81 (IILLVFAACEAALGLSLLVMV).

Belongs to the complex I subunit 4L family. Core subunit of respiratory chain NADH dehydrogenase (Complex I) which is composed of 45 different subunits.

The protein resides in the mitochondrion inner membrane. The catalysed reaction is a ubiquinone + NADH + 5 H(+)(in) = a ubiquinol + NAD(+) + 4 H(+)(out). Core subunit of the mitochondrial membrane respiratory chain NADH dehydrogenase (Complex I) which catalyzes electron transfer from NADH through the respiratory chain, using ubiquinone as an electron acceptor. Part of the enzyme membrane arm which is embedded in the lipid bilayer and involved in proton translocation. The polypeptide is NADH-ubiquinone oxidoreductase chain 4L (MT-ND4L) (Mirounga angustirostris (Northern elephant seal)).